Consider the following 255-residue polypeptide: Homeobox protein DLX-1 (255 aa).

Positions 1 to 14 (MTMTTMPESLNSPV) are enriched in polar residues. 2 disordered regions span residues 1–38 (MTMT…MSHG) and 95–118 (SLAQ…EGGE). Low complexity predominate over residues 25 to 36 (PPNQQMSPSPMS). The span at 100–112 (RLEDPGADSEKST) shows a compositional bias: basic and acidic residues. The segment at residues 128–187 (IRKPRTIYSSLQLQALNRRFQQTQYLALPERAELAASLGLTQTQVKIWFQNKRSKFKKLM) is a DNA-binding region (homeobox). The segment at 204–233 (ALSAGSPPVPPGWNPNSSSGKGSGSSAGSY) is disordered. Low complexity predominate over residues 217 to 232 (NPNSSSGKGSGSSAGS).

The protein belongs to the distal-less homeobox family. As to quaternary structure, interacts with SMAD4 (via homeobox DNA-binding domain). Interacts (via homeobox DNA-binding domain) with POU4F2; this interaction suppresses DLX1-mediated transcriptional activity in postnatal retina and enhances retinal ganglion cell (RGC) differentiation. Expressed in a restricted region of the developing brain, within the diencephalon and the adjacent telencephalic regions.

It localises to the nucleus. Functionally, plays a role as a transcriptional activator or repressor. Inhibits several cytokine signaling pathways, such as TGFB1, activin-A/INHBA and BMP4 by interfering with the transcriptional stimulatory activity of transcription factors, such as MSX2, FAST2, SMAD2 and SMAD3 during hematopoietic cell differentiation. Plays a role in terminal differentiation of interneurons, such as amacrine and bipolar cells in the developing retina. Likely to play a regulatory role in the development of the ventral forebrain. May play a role in craniofacial patterning and morphogenesis and may be involved in the early development of diencephalic subdivisions. This Mus musculus (Mouse) protein is Homeobox protein DLX-1 (Dlx1).